Consider the following 73-residue polypeptide: MPKKGIHPQWYPEAKVICNGEVVMTVGSTKPELKVDVWSGNHPFFTGSQKIIDSEGRVDKFMRKYGMGGKKAR.

Belongs to the bacterial ribosomal protein bL31 family. Type A subfamily. As to quaternary structure, part of the 50S ribosomal subunit.

Functionally, binds the 23S rRNA. In Synechococcus sp. (strain JA-3-3Ab) (Cyanobacteria bacterium Yellowstone A-Prime), this protein is Large ribosomal subunit protein bL31.